A 222-amino-acid chain; its full sequence is MADS-box transcription factor 26 (222 aa).

One can recognise an MADS-box domain in the interval 1-61 (MARGKVQLRR…GKLYDLATTG (61 aa)). A K-box domain is found at 85-176 (RMDPKQEAMV…QEKIVEQNGL (92 aa)).

It is found in the nucleus. Probable transcription factor. This chain is MADS-box transcription factor 26 (MADS26), found in Oryza sativa subsp. indica (Rice).